The sequence spans 543 residues: MSAPAPSPLAIVDAEPLPRQEEVLTDAALAFVAELLHRRFTRAVTNSSPRRADAAREIARTSTLDFLPETAAVRADDSWRVAGPAALNDRRVEITGPTDRKMTINALNSGAKVWLADFEEPSAPTWENVVLGQVNLSDAYTRNIDFTDERTGKTYALRPLKSWRPSSWPRGWHLNERHLVDPDGSFGARRVVVDFGLYFFHNAQRLLDLGKGPYFYLPKTESHLEARLWNDVFVFAQDYVGIPQGTVRATVLIETITAAYEMEEILYELRDHASGLNAGRWDYLFSIVKNFPATRPKFVLPDRNVTMTKLTMTAFMRRYTNCSSYCHNARASAAIGGMAAFIPSRDAEVNKVAFEKVRADKDREANDGFDGSWVAHPDLVPIAMESFDRCWHRPNQKDRLREDVHVEAADLIAVDSLEATTYAGSSSTAVQVGIRYIEAWLRGLGRVAIFNLMEDAATAEISRSQIWQWINAGVEFEHGEKATPIWPRKSRRGRKWRPVREELGEEPFAARDWQHAHDLVVQVSLDEDYADFLTLPAYERLRG.

This sequence belongs to the malate synthase family. As to quaternary structure, homodimer.

The protein localises to the cytoplasm. The catalysed reaction is glyoxylate + acetyl-CoA + H2O = (S)-malate + CoA + H(+). It participates in carbohydrate metabolism; glyoxylate cycle; (S)-malate from isocitrate: step 2/2. This is Malate synthase (aceB) from Streptomyces arenae.